The sequence spans 281 residues: Probable endonuclease 4 (281 aa).

Zn(2+) is bound by residues H67, H107, E142, D176, H179, H211, D224, H226, and E256.

This sequence belongs to the AP endonuclease 2 family. Zn(2+) is required as a cofactor.

It carries out the reaction Endonucleolytic cleavage to 5'-phosphooligonucleotide end-products.. Functionally, endonuclease IV plays a role in DNA repair. It cleaves phosphodiester bonds at apurinic or apyrimidinic (AP) sites, generating a 3'-hydroxyl group and a 5'-terminal sugar phosphate. This chain is Probable endonuclease 4, found in Alkaliphilus oremlandii (strain OhILAs) (Clostridium oremlandii (strain OhILAs)).